Consider the following 422-residue polypeptide: Replication factor C large subunit (422 aa).

Residue Gly-63 to Thr-70 participates in ATP binding.

It belongs to the activator 1 small subunits family. RfcL subfamily. In terms of assembly, heteromultimer composed of small subunits (RfcS) and large subunits (RfcL).

Its function is as follows. Part of the RFC clamp loader complex which loads the PCNA sliding clamp onto DNA. In Pyrobaculum neutrophilum (strain DSM 2338 / JCM 9278 / NBRC 100436 / V24Sta) (Thermoproteus neutrophilus), this protein is Replication factor C large subunit.